We begin with the raw amino-acid sequence, 467 residues long: UDP-N-acetylmuramate--L-alanine ligase (467 aa).

112–118 (GTHGKTT) provides a ligand contact to ATP.

This sequence belongs to the MurCDEF family.

The protein resides in the cytoplasm. It catalyses the reaction UDP-N-acetyl-alpha-D-muramate + L-alanine + ATP = UDP-N-acetyl-alpha-D-muramoyl-L-alanine + ADP + phosphate + H(+). Its pathway is cell wall biogenesis; peptidoglycan biosynthesis. Cell wall formation. This chain is UDP-N-acetylmuramate--L-alanine ligase, found in Paraburkholderia phytofirmans (strain DSM 17436 / LMG 22146 / PsJN) (Burkholderia phytofirmans).